Reading from the N-terminus, the 159-residue chain is MQANSRAFFLLIAVIAFGLVGYALYLQHVEGLQPCPLCVLQRFAFVGIGVFSLLAALSSATRLLWHGLGMLSGLGGIFVAGYHVSLLLNPKASCGIDPIENWVNALPTAKWLPQVFESDGLCTAPLPPVLGVSIPLWSLIWMVILALTLVVAMIRRERR.

The Cytoplasmic segment spans residues 1–8 (MQANSRAF). Residues 9-25 (FLLIAVIAFGLVGYALY) traverse the membrane as a helical segment. The Periplasmic portion of the chain corresponds to 26–43 (LQHVEGLQPCPLCVLQRF). A disulfide bridge connects residues Cys-35 and Cys-38. Residues 44–57 (AFVGIGVFSLLAAL) form a helical membrane-spanning segment. Residues 58–63 (SSATRL) lie on the Cytoplasmic side of the membrane. A helical membrane pass occupies residues 64-81 (LWHGLGMLSGLGGIFVAG). Residues 82-136 (YHVSLLLNPKASCGIDPIENWVNALPTAKWLPQVFESDGLCTAPLPPVLGVSIPL) are Periplasmic-facing. Residues Cys-94 and Cys-122 are joined by a disulfide bond. The helical transmembrane segment at 137-155 (WSLIWMVILALTLVVAMIR) threads the bilayer. Residues 156-159 (RERR) are Cytoplasmic-facing.

Belongs to the DsbB family.

It localises to the cell inner membrane. Required for disulfide bond formation in some periplasmic proteins. Acts by oxidizing the DsbA protein. This chain is Disulfide bond formation protein B, found in Ralstonia nicotianae (strain ATCC BAA-1114 / GMI1000) (Ralstonia solanacearum).